Consider the following 301-residue polypeptide: Homoserine O-acetyltransferase (301 aa).

Cys142 serves as the catalytic Acyl-thioester intermediate. Lys163 and Ser192 together coordinate substrate. Residue His235 is the Proton acceptor of the active site. Glu237 is a catalytic residue. Residue Arg249 participates in substrate binding.

It belongs to the MetA family.

It is found in the cytoplasm. It catalyses the reaction L-homoserine + acetyl-CoA = O-acetyl-L-homoserine + CoA. The protein operates within amino-acid biosynthesis; L-methionine biosynthesis via de novo pathway; O-acetyl-L-homoserine from L-homoserine: step 1/1. Transfers an acetyl group from acetyl-CoA to L-homoserine, forming acetyl-L-homoserine. The protein is Homoserine O-acetyltransferase of Bacillus cytotoxicus (strain DSM 22905 / CIP 110041 / 391-98 / NVH 391-98).